A 451-amino-acid polypeptide reads, in one-letter code: Ubiquinone biosynthesis monooxygenase COQ6, mitochondrial (451 aa).

It belongs to the UbiH/COQ6 family. In terms of assembly, component of a multi-subunit COQ enzyme complex. Requires FAD as cofactor.

It localises to the mitochondrion inner membrane. The catalysed reaction is a 4-hydroxy-3-(all-trans-polyprenyl)benzoate + 2 reduced [2Fe-2S]-[ferredoxin] + O2 + 2 H(+) = a 3,4-dihydroxy-5-(all-trans-polyprenyl)benzoate + 2 oxidized [2Fe-2S]-[ferredoxin] + H2O. The enzyme catalyses a 2-methoxy-6-(all-trans-polyprenyl)phenol + 2 reduced [2Fe-2S]-[ferredoxin] + O2 + 2 H(+) = a 2-methoxy-6-(all-trans-polyprenyl)benzene-1,4-diol + 2 oxidized [2Fe-2S]-[ferredoxin] + H2O. Its pathway is cofactor biosynthesis; ubiquinone biosynthesis. In terms of biological role, FAD-dependent monooxygenase required for two non-consecutive steps during ubiquinone biosynthesis. Required for the C5-ring hydroxylation during ubiquinone biosynthesis by catalyzing the hydroxylation of 4-hydroxy-3-(all-trans-polyprenyl)benzoic acid to 3,4-dihydroxy-5-(all-trans-polyprenyl)benzoic acid. Also acts downstream of coq4, for the C1-hydroxylation during ubiquinone biosynthesis by catalyzing the hydroxylation of 2-methoxy-6-(all-trans-polyprenyl)phenol to 2-methoxy-6-(all-trans-polyprenyl)benzene-1,4-diol. The electrons required for the hydroxylation reaction are funneled indirectly to coq-6 from NADPH via a ferredoxin/ferredoxin reductase system. The sequence is that of Ubiquinone biosynthesis monooxygenase COQ6, mitochondrial from Caenorhabditis elegans.